A 20-amino-acid polypeptide reads, in one-letter code: Methyl-coenzyme M reductase subunit gamma (20 aa).

The tract at residues 1-20 (AYERQFYPGATSVAENNIGH) is disordered.

It belongs to the methyl-coenzyme M reductase gamma subunit family. As to quaternary structure, MCR from M.thermophila is a heterotrimer composed of an alpha, a beta, and a gamma subunit. Requires coenzyme F430 as cofactor.

It localises to the cytoplasm. The catalysed reaction is coenzyme B + methyl-coenzyme M = methane + coenzyme M-coenzyme B heterodisulfide. Its pathway is one-carbon metabolism; methyl-coenzyme M reduction; methane from methyl-coenzyme M: step 1/1. Component of the methyl-coenzyme M reductase (MCR) I that catalyzes the reductive cleavage of methyl-coenzyme M (CoM-S-CH3 or 2-(methylthio)ethanesulfonate) using coenzyme B (CoB or 7-mercaptoheptanoylthreonine phosphate) as reductant which results in the production of methane and the mixed heterodisulfide of CoB and CoM (CoM-S-S-CoB). This is the final step in methanogenesis. The chain is Methyl-coenzyme M reductase subunit gamma from Methanosarcina thermophila.